We begin with the raw amino-acid sequence, 482 residues long: ATP synthase subunit beta (482 aa).

162-169 (GGAGVGKT) provides a ligand contact to ATP.

This sequence belongs to the ATPase alpha/beta chains family. As to quaternary structure, F-type ATPases have 2 components, CF(1) - the catalytic core - and CF(0) - the membrane proton channel. CF(1) has five subunits: alpha(3), beta(3), gamma(1), delta(1), epsilon(1). CF(0) has four main subunits: a(1), b(1), b'(1) and c(9-12).

The protein resides in the cellular thylakoid membrane. The catalysed reaction is ATP + H2O + 4 H(+)(in) = ADP + phosphate + 5 H(+)(out). Functionally, produces ATP from ADP in the presence of a proton gradient across the membrane. The catalytic sites are hosted primarily by the beta subunits. The polypeptide is ATP synthase subunit beta (Nostoc sp. (strain PCC 7120 / SAG 25.82 / UTEX 2576)).